A 117-amino-acid chain; its full sequence is Large ribosomal subunit protein bL20 (117 aa).

The protein belongs to the bacterial ribosomal protein bL20 family.

Its function is as follows. Binds directly to 23S ribosomal RNA and is necessary for the in vitro assembly process of the 50S ribosomal subunit. It is not involved in the protein synthesizing functions of that subunit. The protein is Large ribosomal subunit protein bL20 of Acetivibrio thermocellus (strain ATCC 27405 / DSM 1237 / JCM 9322 / NBRC 103400 / NCIMB 10682 / NRRL B-4536 / VPI 7372) (Clostridium thermocellum).